The following is a 303-amino-acid chain: MMSESNKQQAVNKLTEIVANFTAMISTRMPDDVVDKLKQLKDAETSSMGKIIYHTMFDNMQKAIDLNRPACQDTGEIMFFVKVGSRFPLLGELQSILKQAVEEATIKAPLRHNAVEIFDEVNTGKNTGSGVPWVTWDIVPDGDDAEIEVYMAGGGCTLPGRSKVLMPSEGYEGVVKFVFENISTLAVNACPPVLVGVGIATSVETAAVLSRKAILRPIGSRHPNPKAAELELRLEEGLNRLGIGPQGLTGNSSVMGVHIESAARHPSTIGVAVSTGCWAHRRGTLLVHADLTFENLSHTRSAL.

Iron-sulfur cluster contacts are provided by cysteine 71, cysteine 190, and cysteine 277.

The protein belongs to the class-I fumarase family. In terms of assembly, tetramer of two alpha and two beta subunits. The cofactor is iron-sulfur cluster.

It catalyses the reaction (2R,3R)-tartrate = oxaloacetate + H2O. In Escherichia coli O157:H7, this protein is L(+)-tartrate dehydratase subunit alpha (ttdA).